The sequence spans 1159 residues: Ferroxidase HEPHL1 (1159 aa).

A signal peptide spans 1–24 (MPRKQPAGCIFLLTFLGLSGLVGT). 6 consecutive Plastocyanin-like domains span residues 25–207 (VTRT…LLVC), 218–366 (TRND…VDNC), 379–561 (QRRY…LLVC), 571–719 (TQKG…VSSC), 731–907 (MIRT…LITC), and 915–1092 (KGRR…VPSN). Residues 25-1114 (VTRTYYIGIV…KNLGPTGAKA (1090 aa)) lie on the Extracellular side of the membrane. 2 residues coordinate Cu cation: histidine 127 and histidine 129. The N-linked (GlcNAc...) asparagine glycan is linked to asparagine 161. Residues cysteine 181 and cysteine 207 are joined by a disulfide bond. 2 residues coordinate Cu cation: histidine 187 and histidine 189. The N-linked (GlcNAc...) asparagine glycan is linked to asparagine 236. Cysteines 285 and 366 form a disulfide. Cu cation contacts are provided by histidine 304, cysteine 347, and histidine 352. N-linked (GlcNAc...) asparagine glycosylation is present at asparagine 407. Cysteine 535 and cysteine 561 form a disulfide bridge. N-linked (GlcNAc...) asparagine glycosylation occurs at asparagine 589. A disulfide bridge connects residues cysteine 638 and cysteine 719. Positions 657, 700, 705, and 710 each coordinate Cu cation. Asparagine 772 carries N-linked (GlcNAc...) asparagine glycosylation. Cysteine 881 and cysteine 907 form a disulfide bridge. A glycan (N-linked (GlcNAc...) asparagine) is linked at asparagine 935. Residues histidine 1003, histidine 1006, histidine 1008, histidine 1048, cysteine 1049, histidine 1050, histidine 1054, and methionine 1059 each coordinate Cu cation. The helical transmembrane segment at 1115 to 1135 (ALVILFIIGLLLLITTVILSL) threads the bilayer. Residues 1136 to 1159 (RLCSAMKQTDYQQVQSCALPTDAL) lie on the Cytoplasmic side of the membrane.

This sequence belongs to the multicopper oxidase family. Cu cation is required as a cofactor.

The protein resides in the membrane. It carries out the reaction 4 Fe(2+) + O2 + 4 H(+) = 4 Fe(3+) + 2 H2O. Its function is as follows. Is a copper-binding glycoprotein with ferroxidase activity. It oxidizes Fe(2+) to Fe(3+) without releasing radical oxygen species. May be involved in the regulation of intracellular iron content. The polypeptide is Ferroxidase HEPHL1 (HEPHL1) (Homo sapiens (Human)).